The primary structure comprises 221 residues: TVDFASESANERETQKEILDKHNALRRSVRPTARNMLQMEWNFNAAQNATRWADRCSFAHSPQHLRTVGELKCGENLFMSSHPFPWTRVIQSWYDENKNFKYGVGANPPNAVIGHYTQIVWYKSYLLGCAAARCPSSSYNYYYVCHYCPAGNIIGKIATPYKSGPPCGDCPSACVNGLCTNPCKHVDRYSNCNSLVQQISCQSNNMNTDCPASCFCHNEIK.

One can recognise an SCP domain in the interval 19–147; that stretch reads LDKHNALRRS…SYNYYYVCHY (129 aa). An N-linked (GlcNAc...) asparagine glycan is attached at N48. 8 disulfides stabilise this stretch: C56–C134, C73–C148, C129–C145, C167–C174, C170–C179, C183–C216, C192–C210, and C201–C214. Residues 183-216 form the ShKT domain; the sequence is CKHVDRYSNCNSLVQQISCQSNNMNTDCPASCFC.

In terms of assembly, forms a stable, non-covalent complex with SSP-2.

The protein resides in the secreted. The protein is Serotriflin of Protobothrops flavoviridis (Habu).